The following is a 256-amino-acid chain: 4-oxalocrotonate decarboxylase (256 aa).

The protein belongs to the hydratase/decarboxylase family. Forms a complex with AmnF. The cofactor is Mg(2+). Mn(2+) is required as a cofactor.

It catalyses the reaction (3E)-2-oxohex-3-enedioate + H(+) = 2-oxopent-4-enoate + CO2. Its activity is regulated as follows. Strongly inhibited by Fe(2+), Fe(3+), K(3)[Fe(CN)(6)], Ag(+) and Cu(2+). In terms of biological role, involved in the modified meta-cleavage pathway for the 2-aminophenol catabolism. The chain is 4-oxalocrotonate decarboxylase (amnE) from Pseudomonas sp.